Reading from the N-terminus, the 251-residue chain is Ubiquitin-conjugating enzyme E2 22 (251 aa).

The UBC core domain maps to 10-156 (NVIKQLAKEL…ARLYTGIHAK (147 aa)). Catalysis depends on Cys-94, which acts as the Glycyl thioester intermediate. A compositionally biased stretch (basic and acidic residues) spans 230–240 (GLAKVQADKKK). Residues 230 to 251 (GLAKVQADKKKVDARKKSLKRL) form a disordered region. Positions 230 to 251 (GLAKVQADKKKVDARKKSLKRL) form a coiled coil. Residues 241-251 (VDARKKSLKRL) show a composition bias toward basic residues.

This sequence belongs to the ubiquitin-conjugating enzyme family. In terms of processing, self-ubiquitinated. As to expression, expressed in seeds, pistils, siliques, hypocotyls and leaves.

The enzyme catalyses S-ubiquitinyl-[E1 ubiquitin-activating enzyme]-L-cysteine + [E2 ubiquitin-conjugating enzyme]-L-cysteine = [E1 ubiquitin-activating enzyme]-L-cysteine + S-ubiquitinyl-[E2 ubiquitin-conjugating enzyme]-L-cysteine.. It functions in the pathway protein modification; protein ubiquitination. Its function is as follows. Accepts the ubiquitin from the E1 complex and catalyzes its covalent attachment to other proteins. This chain is Ubiquitin-conjugating enzyme E2 22 (UBC22), found in Arabidopsis thaliana (Mouse-ear cress).